We begin with the raw amino-acid sequence, 321 residues long: MSSTSSSQMVQLVADKHVRYILMAEKKKESFESVVMDHLRMNGAYWGLTTLDLLDKLGCVSEEEVISWLMTCQHESGGFAGNTGHDPHILYTLSAVQILALFDKINILDIGKVSSYVAKLQNEDGSFSGDMWGEIDTRFSYIAICCLSILKCLDKINVEKAVKYIVSCKNLDGGFGCTPGAESHAGQIFCCVGALAITGSLHHVDKDSLGWWLCERQLKAGGLNGRPEKLADVCYSWWVLSSLIMIDRVHWIDKAKLVKFILDCQDLDNGGISDRPEDAVDIFHTYFGVAGLSLLEYPGVKVIDPAYALPVDVVNRIIFTK.

Residue Ser-2 is modified to N-acetylserine. PFTB repeat units lie at residues 14–55, 62–103, 110–151, 158–199, 206–247, and 254–296; these read ADKH…DLLD, EEEV…ALFD, IGKV…SILK, VEKA…AITG, KDSL…IMID, and KAKL…SLLE. Geranylgeranyl diphosphate-binding positions include 184-186 and 226-229; these read HAG and RPEK. Residues Asp-232 and Cys-234 each coordinate Zn(2+). Geranylgeranyl diphosphate is bound at residue 235-238; that stretch reads YSWW. Residue His-284 coordinates Zn(2+).

This sequence belongs to the protein prenyltransferase subunit beta family. Heterotrimer composed of the alpha subunit RGTA, the beta subunit RGTB and REP; within this trimer, RGTA and RGTB form the catalytic component, while REP mediates peptide substrate binding. It depends on Zn(2+) as a cofactor. The cofactor is Mg(2+).

It carries out the reaction geranylgeranyl diphosphate + L-cysteinyl-[protein] = S-geranylgeranyl-L-cysteinyl-[protein] + diphosphate. With respect to regulation, the enzymatic reaction requires the aid of the Rab escort protein REP. Catalyzes the transfer of a geranylgeranyl moiety from geranylgeranyl diphosphate to both cysteines of Rab proteins with the C-terminal sequence -CCXX, CXXX, -XCCX and -XCXC, such as RABA1A, RABA2A, RABF2A and RABG2. Involved in the geranylgeranylation of RABA2A. In vitro, can prenylate PGGTI targets with the C-terminal sequence Cys-aliphatic-aliphatic-X (CaaX) with leucine in the terminal position. Substrates with the C-terminal sequence -CSIL such as ARAC11/ROP1 or GG2/AGG2 are prenylated independently of REP and when the beta subunit is associated with the alpha subunit RGTA1. Its function is as follows. Required for male fertility and root tip growth. In Arabidopsis thaliana (Mouse-ear cress), this protein is Geranylgeranyl transferase type-2 subunit beta 1.